Reading from the N-terminus, the 167-residue chain is Signal peptidase complex subunit 2 (167 aa).

Residues M1–R36 lie on the Cytoplasmic side of the membrane. A helical transmembrane segment spans residues L37–Y57. Residues G58–Y68 are Lumenal-facing. A helical membrane pass occupies residues L69–G89. Residues S90–N167 are Cytoplasmic-facing.

The protein belongs to the SPCS2 family. As to quaternary structure, component of the signal peptidase complex (SPC) composed of a catalytic subunit sec11 and three accessory subunits spc1, spc2 and spc3. The complex induces a local thinning of the ER membrane which is used to measure the length of the signal peptide (SP) h-region of protein substrates. This ensures the selectivity of the complex towards h-regions shorter than 18-20 amino acids. SPC associates with the translocon complex.

It localises to the endoplasmic reticulum membrane. Its function is as follows. Component of the signal peptidase complex (SPC) which catalyzes the cleavage of N-terminal signal sequences from nascent proteins as they are translocated into the lumen of the endoplasmic reticulum. Enhances the enzymatic activity of SPC and facilitates the interactions between different components of the translocation site. The polypeptide is Signal peptidase complex subunit 2 (spc2) (Schizosaccharomyces pombe (strain 972 / ATCC 24843) (Fission yeast)).